The primary structure comprises 427 residues: Enolase (427 aa).

Gln164 contacts (2R)-2-phosphoglycerate. Residue Glu206 is the Proton donor of the active site. The Mg(2+) site is built by Asp243, Glu284, and Asp311. The (2R)-2-phosphoglycerate site is built by Lys336, Arg365, Ser366, and Lys387. The active-site Proton acceptor is the Lys336.

This sequence belongs to the enolase family. Mg(2+) serves as cofactor.

Its subcellular location is the cytoplasm. The protein resides in the secreted. The protein localises to the cell surface. The enzyme catalyses (2R)-2-phosphoglycerate = phosphoenolpyruvate + H2O. It participates in carbohydrate degradation; glycolysis; pyruvate from D-glyceraldehyde 3-phosphate: step 4/5. Catalyzes the reversible conversion of 2-phosphoglycerate (2-PG) into phosphoenolpyruvate (PEP). It is essential for the degradation of carbohydrates via glycolysis. The polypeptide is Enolase (Synechococcus sp. (strain JA-2-3B'a(2-13)) (Cyanobacteria bacterium Yellowstone B-Prime)).